A 156-amino-acid polypeptide reads, in one-letter code: Small ribosomal subunit protein uS7 (156 aa).

This sequence belongs to the universal ribosomal protein uS7 family. Part of the 30S ribosomal subunit. Contacts proteins S9 and S11.

Its function is as follows. One of the primary rRNA binding proteins, it binds directly to 16S rRNA where it nucleates assembly of the head domain of the 30S subunit. Is located at the subunit interface close to the decoding center, probably blocks exit of the E-site tRNA. The chain is Small ribosomal subunit protein uS7 from Synechococcus sp. (strain CC9311).